The primary structure comprises 273 residues: Eukaryotic translation initiation factor 3 subunit G-2 (273 aa).

The interval 165-193 (KYVPPFMKDGGGGPGGKNWGRGRERDDSS) is disordered. Gly residues predominate over residues 173 to 183 (DGGGGPGGKNW). The RRM domain occupies 193 to 271 (SAVRISNLSE…LILCVEWSKP (79 aa)).

Belongs to the eIF-3 subunit G family. As to quaternary structure, component of the eukaryotic translation initiation factor 3 (eIF-3) complex. The eIF-3 complex interacts with pix.

It is found in the cytoplasm. Functionally, RNA-binding component of the eukaryotic translation initiation factor 3 (eIF-3) complex, which is involved in protein synthesis of a specialized repertoire of mRNAs and, together with other initiation factors, stimulates binding of mRNA and methionyl-tRNAi to the 40S ribosome. The eIF-3 complex specifically targets and initiates translation of a subset of mRNAs involved in cell proliferation. This subunit can bind 18S rRNA. In Drosophila yakuba (Fruit fly), this protein is Eukaryotic translation initiation factor 3 subunit G-2.